We begin with the raw amino-acid sequence, 4493 residues long: Mucin-17 (4493 aa).

The first 25 residues, 1-25 (MPRPGTMALCLLTLVLSLLPPQAAA), serve as a signal peptide directing secretion. Residues 26 to 4393 (EQDLSVNRAV…QGTQKSLVYG (4368 aa)) are Extracellular-facing. The span at 88-105 (NPEMTSIESSVTSDTPGV) shows a compositional bias: polar residues. Disordered regions lie at residues 88-159 (NPEM…SISS), 188-223 (LTTS…SMPA), 248-277 (TISA…STPL), and 306-344 (VITS…ASTM). Positions 106–146 (SSTRMTPTESRTTSESTSDSTTLFPSSTEDTSSPTTPEGTD) are enriched in low complexity. Polar residues predominate over residues 148-159 (PMSTPSEESISS). 57 repeat units span residues 185-245 (STPL…EIST), 246-300 (PVTI…TTPA), 301-361 (ATNI…PVDT), 362-418 (STLV…TIPV), 420-477 (SKTF…TTPV), 479-538 (SKTQ…PVDT), 539-597 (STPV…PADS), 598-654 (NTFV…TTPV), 656-715 (SNTP…PVDT), 716-774 (STPV…PLDT), 775-831 (STHI…TTPV), 833-892 (SNSP…PVDT), 893-951 (STPV…PVDT), 952-1010 (STPV…PVDS), 1011-1069 (NTPL…PADT), 1070-1121 (STPV…ASTL), 1122-1187 (STTP…PVDS), 1188-1246 (KTQV…PVDT), 1247-1305 (STPV…PVDT), 1306-1364 (KGPV…PVDN), 1365-1423 (STPV…PVDT), 1424-1482 (STPG…PVDS), 1483-1541 (NSPV…PAVT), 1542-1600 (STPV…PIDS), 1601-1656 (KTQV…TTPV), 1658-1717 (SNSP…PVDN), 1718-1776 (STPV…PIDT), 1777-1835 (STPV…PVDS), 1836-1895 (NSPV…AVTS), 1896-1951 (TPVT…TTLA), 1953-2012 (TRTP…PVDT), 2013-2071 (STPA…PVDS), 2072-2127 (KTQV…TTPV), 2129-2188 (SNSP…PVDT), 2189-2247 (STPV…PVDT), 2248-2306 (STPV…PVDS), 2307-2365 (NTPF…PADT), 2366-2424 (STPV…PVDT), 2425-2483 (STPV…PVDT), 2484-2540 (STPM…TTPV), 2542-2601 (SNSP…PVDT), 2602-2653 (SIPV…ASTL), 2654-2719 (STTP…PVDT), 2720-2770 (STPV…EAST), 2772-2837 (STTA…PVDT), 2838-2896 (STPV…PVDT), 2897-2955 (SIPV…PVDT), 2956-3014 (RTPV…PADT), 3015-3073 (STPV…PVDS), 3074-3132 (NSPV…PVDT), 3133-3191 (STPV…PVDT), 3192-3247 (STPV…TTPV), 3249-3308 (SNTP…PADT), 3309-3367 (STPV…PVDT), 3368-3426 (STPV…PVDS), 3427-3485 (NTLV…PVDT), and 3486-3544 (STPV…PVDS). The interval 185 to 3727 (STPLTTSTQA…SVVTSTPVTT (3543 aa)) is 59 X approximate tandem repeats. The segment covering 188–210 (LTTSTQASSSPTTPESTTIPKST) has biased composition (low complexity). Positions 211–223 (NSEGSTPLTSMPA) are enriched in polar residues. The segment covering 308-323 (TSTEASSSPTTAEGTS) has biased composition (low complexity). Residues 324–344 (IPTSTYTEGSTPLTSTPASTM) show a composition bias toward polar residues. Residues 425–441 (TTASEASSSPTTAEDTS) show a composition bias toward low complexity. 6 disordered regions span residues 425–629 (TTAS…ERGT), 644–868 (SEAS…TPLT), 886–1104 (STTP…TPLT), 1116–1163 (SEAS…TPLA), 1175–1279 (SEAN…GSTL), and 1296–1338 (STLL…GRTP). Polar residues predominate over residues 442–483 (IATSTPSEGSTPLTSMPVSTTPVASSEASNLSTTPVDSKTQV). Asparagine 471 carries N-linked (GlcNAc...) asparagine glycosylation. Positions 484 to 497 (TTSTEASSSPPTAE) are enriched in low complexity. Positions 498 to 528 (VNSMPTSTPSEGSTPLTSMSVSTMPVASSEA) are enriched in polar residues. 2 stretches are compositionally biased toward low complexity: residues 529-573 (STLS…TPLT) and 584-618 (SSEA…EGTS). Polar residues-rich tracts occupy residues 619 to 629 (MPTSTYSERGT) and 644 to 660 (SEAS…NTPV). Over residues 661–677 (TTSTEATSSSTTAEGTS) the composition is skewed to low complexity. Over residues 678 to 705 (MPTSTYTEGSTPLTSMPVNTTLVASSEA) the composition is skewed to polar residues. Residue asparagine 696 is glycosylated (N-linked (GlcNAc...) asparagine). The segment covering 706–733 (STLSTTPVDTSTPVTTSTEASSSPTTAD) has biased composition (low complexity). Positions 737–754 (MPTSTPSEGSTPLTSMPV) are enriched in polar residues. The segment covering 755–776 (SKTLLTSSEASTLSTTPLDTST) has biased composition (low complexity). The segment covering 777–832 (HITTSTEASCSPTTTEGTSMPISTPSEGSPLLTSIPVSITPVTSPEASTLSTTPVD) has biased composition (polar residues). Over residues 833 to 849 (SNSPVTTSTEVSSSPTP) the composition is skewed to low complexity. Residues 854 to 868 (SMPTSTYSEGRTPLT) show a composition bias toward polar residues. Residues 886-900 (STTPVDTSTPVTNST) show a composition bias toward low complexity. The N-linked (GlcNAc...) asparagine glycan is linked to asparagine 898. Residues 901 to 944 (EARSSPTTSEGTSMPTSTPGEGSTPLTSMPDSTTPVVSSEARTL) are compositionally biased toward polar residues. Over residues 945–972 (SATPVDTSTPVTTSTEATSSPTTAEGTS) the composition is skewed to low complexity. Positions 973–1011 (IPTSTPSEGTTPLTSTPVSHTLVANSEASTLSTTPVDSN) are enriched in polar residues. The segment covering 1012-1021 (TPLTTSTEAS) has biased composition (low complexity). Over residues 1029 to 1062 (GTSMPTSTPSEGSTPLTRMPVSTTMVASSETSTL) the composition is skewed to polar residues. The span at 1063-1090 (STTPADTSTPVTTYSQASSSSTTADGTS) shows a compositional bias: low complexity. 2 stretches are compositionally biased toward polar residues: residues 1091 to 1104 (MPTS…TPLT) and 1116 to 1132 (SEAS…SIPV). Over residues 1133-1149 (TTSTEASSSPTTAEGTS) the composition is skewed to low complexity. Polar residues-rich tracts occupy residues 1175 to 1198 (SEAN…TEAS) and 1205 to 1222 (EVTS…TPLT). Over residues 1237–1279 (STLSTSPVDTSTPVTTSAETSSSPTTAEGTSLPTSTTSEGSTL) the composition is skewed to low complexity. 2 stretches are compositionally biased toward polar residues: residues 1310–1320 (VTSNEVSSSPT) and 1326–1338 (SMPT…GRTP). Asparagine 1345 carries an N-linked (GlcNAc...) asparagine glycan. The segment covering 1360–1394 (TPVDNSTPVTTSTEACSSPTTSEGTSMPNSNPSEG) has biased composition (polar residues). Disordered stretches follow at residues 1360-1516 (TPVD…STAL), 1537-1575 (TPAV…STPL), 1590-1930 (ANTL…PLTS), 1947-2163 (STTL…RTPL), 2177-2281 (AIST…TTPL), 2295-2501 (EVST…TTAE), 2524-2630 (TTPV…TPSE), 2647-2693 (SSEA…RSTP), 2709-2751 (ASTL…DGST), 2765-2853 (SSEA…SPTT), 2879-2925 (TPVA…TPSE), 2942-3167 (GSEA…TPLT), 3182-3577 (STLS…GSSS), 3589-3635 (TSSE…EVST), 3667-3701 (ITST…TMPV), 3785-3812 (MTTA…TSER), 3829-3849 (PSEA…LLTS), 3892-3914 (ASIA…DTAS), 3965-3988 (VITS…FSTT), and 4008-4129 (STAP…TPTV). Low complexity-rich tracts occupy residues 1395–1415 (TTPL…EAST) and 1423–1442 (TSTP…TAEG). A compositionally biased stretch (polar residues) spans 1461 to 1483 (PVSNTPVANSEASTLSTTPVDSN). The span at 1484–1499 (SPVVTSTAVSSSPTPA) shows a compositional bias: low complexity. Positions 1504-1516 (IAISTPSEGSTAL) are enriched in polar residues. Residues 1537–1547 (TPAVTSTPVTT) show a composition bias toward low complexity. Composition is skewed to polar residues over residues 1548–1575 (YSQA…STPL) and 1590–1604 (ANTL…KTQV). The segment covering 1605-1620 (TASTEASSSTTAEGSS) has biased composition (low complexity). Composition is skewed to polar residues over residues 1621–1673 (MTIS…SSPT) and 1679–1775 (SMPT…TPID). Low complexity predominate over residues 1776 to 1797 (TSTPVTTSTEATSSPTTAEGTS). Positions 1798–1836 (IPTSTLSEGMTPLTSTPVSHTLVANSEASTLSTTPVDSN) are enriched in polar residues. A compositionally biased stretch (low complexity) spans 1837-1852 (SPVVTSTAVSSSPTPA). Polar residues predominate over residues 1856–1883 (SIATSTPSEGSTALTSIPVSTTTVASSE). Positions 1884 to 1900 (TNTLSTTPAVTSTPVTT) are enriched in low complexity. Composition is skewed to polar residues over residues 1901 to 1921 (YAQV…TSTP) and 1947 to 1976 (STTL…TSMP). Positions 1984–2033 (STPLTSMPLSTTLVVSSEASTLSTTPVDTSTPATTSTEGSSSPTTAGGTS) are enriched in low complexity. Polar residues-rich tracts occupy residues 2034-2043 (IQTSTPSERT) and 2051-2077 (VSTT…QVTN). An N-linked (GlcNAc...) asparagine glycan is attached at asparagine 2077. The span at 2078 to 2091 (STEASSSATAEGSS) shows a compositional bias: low complexity. The segment covering 2092-2156 (MTISAPSEGS…EGTSMQTSTY (65 aa)) has biased composition (polar residues). Low complexity predominate over residues 2177–2196 (AISTLSTTPVDTSTPVTNST). An N-linked (GlcNAc...) asparagine glycan is attached at asparagine 2194. The span at 2197 to 2240 (EARSSPTTSEGTSMPTSTPSEGSTPFTSMPVSTMPVVTSEASTL) shows a compositional bias: polar residues. Over residues 2241–2268 (SATPVDTSTPVTTSTEATSSPTTAEGTS) the composition is skewed to low complexity. Composition is skewed to polar residues over residues 2269–2281 (IPTS…TTPL) and 2295–2307 (EVST…VDSN). A compositionally biased stretch (low complexity) spans 2308-2317 (TPFTTSTEAS). The segment covering 2325 to 2358 (GTSMPTSTSSEGNTPLTRMPVSTTMVASFETSTL) has biased composition (polar residues). Residues 2359–2371 (STTPADTSTPVTT) show a composition bias toward low complexity. Positions 2372-2395 (YSQAGSSPTTADDTSMPTSTYSEG) are enriched in polar residues. Composition is skewed to low complexity over residues 2396-2445 (STPL…EGTS) and 2462-2499 (PVST…SPTT). The span at 2524–2547 (TTPVASPEASTLSTTPVDSNSPVV) shows a compositional bias: polar residues. Low complexity predominate over residues 2548 to 2563 (TSTEISSSATSAEGTS). A compositionally biased stretch (polar residues) spans 2564-2576 (MPTSTYSEGSTPL). Residues 2586–2617 (LASSEASTLSTTPVDTSIPVTTSTETSSSPTT) show a composition bias toward low complexity. A compositionally biased stretch (polar residues) spans 2618–2628 (AKDTSMPISTP). Positions 2654–2681 (STTPVDTRTLVTTSTGTSSSPTTAEGSS) are enriched in low complexity. Residues 2682 to 2693 (MPTSTPGERSTP) are compositionally biased toward polar residues. The segment covering 2710–2740 (STLSTTPVDTSTPVTTSAEASSSPTTAEGTS) has biased composition (low complexity). Residues 2741–2751 (MRISTPSDGST) show a composition bias toward polar residues. Low complexity-rich tracts occupy residues 2765-2816 (SSEA…TSMP) and 2829-2853 (TLST…SPTT). Residues 2879–2900 (TPVASSEASTLSTTPVDTSIPV) show a composition bias toward polar residues. Composition is skewed to low complexity over residues 2901–2917 (TTST…EGTS) and 2950–2976 (TTPV…EGTS). The segment covering 2988–3009 (PLTSMSVSTMPVASSEASTLSR) has biased composition (polar residues). A compositionally biased stretch (low complexity) spans 3010 to 3031 (TPADTSTPVTTSTEASSSPTTA). Residues 3037 to 3057 (PISTPSEGSTPLTSIPVSTTP) are compositionally biased toward polar residues. 2 stretches are compositionally biased toward low complexity: residues 3073–3089 (SNSP…SPTP) and 3104–3140 (STPL…TTST). Over residues 3141–3166 (EAHSSPTTSEGTSMPTSTPSEGSTPL) the composition is skewed to polar residues. The span at 3185–3211 (SATPVDTSTPVTTSTEATSSTTAEGTS) shows a compositional bias: low complexity. Positions 3212-3253 (IPTSTPSEGMTPLTSVPVSNTPVASSEASILSTTPVDSNTPL) are enriched in polar residues. Residues 3254-3267 (TTSTEASSSPPTAE) show a composition bias toward low complexity. Polar residues predominate over residues 3268–3288 (GTSMPTSTPSEGSTPLTSMPV). Low complexity predominate over residues 3289–3314 (STTTVASSETSTLSTTPADTSTPVTT). Residues 3329 to 3357 (SMPTSTYSEGSTPLTNMSFSTTPVVSSEA) show a composition bias toward polar residues. Asparagine 3344 carries N-linked (GlcNAc...) asparagine glycosylation. A compositionally biased stretch (low complexity) spans 3358–3375 (STLSTTPVDTSTPVTTST). Polar residues predominate over residues 3376–3401 (EASLSPTTAEGTSIPTSSPSEGTTPL). Residues 3405–3414 (PVSTTPVVSS) show a composition bias toward low complexity. Composition is skewed to polar residues over residues 3415–3441 (EVNT…SSPT) and 3447–3475 (SLPT…SSEA). The segment covering 3476-3501 (STLSTTPVDTSTPVTTSSPTNSSPTT) has biased composition (low complexity). Composition is skewed to polar residues over residues 3502-3549 (AEVT…TFVT) and 3558-3571 (PATL…MSTP). Residues 3589-3616 (TSSEASTPSTPSVDRSTPVTTSTQSNST) are compositionally biased toward low complexity. A run of 2 repeats spans residues 3604 to 3662 (STPV…PVDT) and 3663 to 3727 (STPV…PVTT). A compositionally biased stretch (polar residues) spans 3626–3635 (PMSTPSEVST). Low complexity predominate over residues 3667 to 3679 (ITSTQVSSSPVTP). Polar residues-rich tracts occupy residues 3690-3701 (SEGSTPLTTMPV) and 3785-3806 (MTTA…TMPM). 3 stretches are compositionally biased toward low complexity: residues 3967-3988 (TSTE…FSTT), 4008-4083 (STAP…SSTT), and 4090-4129 (TTMT…TPTV). N-linked (GlcNAc...) asparagine glycosylation occurs at asparagine 4116. The region spanning 4131-4170 (RTTTCFGDGCQNTASRCKNGGTWDGLKCQCPNLYYGELCE) is the EGF-like domain. Intrachain disulfides connect cysteine 4135/cysteine 4147, cysteine 4140/cysteine 4158, and cysteine 4160/cysteine 4169. An SEA domain is found at 4184–4291 (ISAQMELTVT…QQIMINDICS (108 aa)). Asparagine 4205, asparagine 4236, asparagine 4267, asparagine 4297, and asparagine 4305 each carry an N-linked (GlcNAc...) asparagine glycan. Residues 4394-4414 (LVGAGVVLMLIILVALLMLVF) form a helical membrane-spanning segment. Residues 4415-4493 (RSKREVKRQK…QRPQVMTTSF (79 aa)) lie on the Cytoplasmic side of the membrane.

In terms of assembly, interacts via its C-terminus with PDZK1 and this interaction appears important for proper localization. Probably cleaved within the SEA domain. In terms of processing, N-glycosylated. Contains high mannose and complex-type glycans. The forms containing the complex type glycans localize to the cell surface. Not O-glycosylated. As to expression, expressed almost exclusively in the intestine. Expression is especially high in both the duodenum and transverse colon. Expressed in mature absorptive cells of the small intestinal villi. No expression is detected in goblet cells. Highly expressed in pancreatic adenocarcinoma tissue (at protein level). Expression is not detectable in normal pancreas, in pancreatitis or in cell lines derived from other cancers.

Its subcellular location is the cell membrane. It is found in the secreted. In terms of biological role, probably plays a role in maintaining homeostasis on mucosal surfaces. This chain is Mucin-17 (MUC17), found in Homo sapiens (Human).